Reading from the N-terminus, the 612-residue chain is Dihydroxy-acid dehydratase (612 aa).

Residue Asp-81 participates in Mg(2+) binding. [2Fe-2S] cluster is bound at residue Cys-122. Residues Asp-123 and Lys-124 each coordinate Mg(2+). Lys-124 bears the N6-carboxylysine mark. Cys-193 is a binding site for [2Fe-2S] cluster. Glu-489 provides a ligand contact to Mg(2+). The active-site Proton acceptor is the Ser-515.

It belongs to the IlvD/Edd family. Homodimer. The cofactor is [2Fe-2S] cluster. Mg(2+) is required as a cofactor.

It catalyses the reaction (2R)-2,3-dihydroxy-3-methylbutanoate = 3-methyl-2-oxobutanoate + H2O. It carries out the reaction (2R,3R)-2,3-dihydroxy-3-methylpentanoate = (S)-3-methyl-2-oxopentanoate + H2O. It functions in the pathway amino-acid biosynthesis; L-isoleucine biosynthesis; L-isoleucine from 2-oxobutanoate: step 3/4. The protein operates within amino-acid biosynthesis; L-valine biosynthesis; L-valine from pyruvate: step 3/4. Functions in the biosynthesis of branched-chain amino acids. Catalyzes the dehydration of (2R,3R)-2,3-dihydroxy-3-methylpentanoate (2,3-dihydroxy-3-methylvalerate) into 2-oxo-3-methylpentanoate (2-oxo-3-methylvalerate) and of (2R)-2,3-dihydroxy-3-methylbutanoate (2,3-dihydroxyisovalerate) into 2-oxo-3-methylbutanoate (2-oxoisovalerate), the penultimate precursor to L-isoleucine and L-valine, respectively. The chain is Dihydroxy-acid dehydratase from Xanthomonas oryzae pv. oryzae (strain MAFF 311018).